Consider the following 164-residue polypeptide: Peptide methionine sulfoxide reductase MsrA (164 aa).

C16 is a catalytic residue.

Belongs to the MsrA Met sulfoxide reductase family.

The catalysed reaction is L-methionyl-[protein] + [thioredoxin]-disulfide + H2O = L-methionyl-(S)-S-oxide-[protein] + [thioredoxin]-dithiol. It carries out the reaction [thioredoxin]-disulfide + L-methionine + H2O = L-methionine (S)-S-oxide + [thioredoxin]-dithiol. Functionally, has an important function as a repair enzyme for proteins that have been inactivated by oxidation. Catalyzes the reversible oxidation-reduction of methionine sulfoxide in proteins to methionine. The polypeptide is Peptide methionine sulfoxide reductase MsrA (Clostridium tetani (strain Massachusetts / E88)).